A 104-amino-acid polypeptide reads, in one-letter code: Large ribosomal subunit protein uL24 (104 aa).

The protein belongs to the universal ribosomal protein uL24 family. As to quaternary structure, part of the 50S ribosomal subunit.

Its function is as follows. One of two assembly initiator proteins, it binds directly to the 5'-end of the 23S rRNA, where it nucleates assembly of the 50S subunit. Functionally, one of the proteins that surrounds the polypeptide exit tunnel on the outside of the subunit. The polypeptide is Large ribosomal subunit protein uL24 (Sodalis glossinidius (strain morsitans)).